A 159-amino-acid chain; its full sequence is Phosphopantetheine adenylyltransferase (159 aa).

Substrate is bound at residue Ser-8. Residues 8–9 (SF) and His-16 each bind ATP. Residues Lys-40, Leu-72, and Arg-86 each coordinate substrate. Residues 87–89 (GLR), Glu-97, and 122–128 (YSFISSS) contribute to the ATP site.

This sequence belongs to the bacterial CoaD family. As to quaternary structure, homohexamer. Mg(2+) is required as a cofactor.

It localises to the cytoplasm. The enzyme catalyses (R)-4'-phosphopantetheine + ATP + H(+) = 3'-dephospho-CoA + diphosphate. The protein operates within cofactor biosynthesis; coenzyme A biosynthesis; CoA from (R)-pantothenate: step 4/5. In terms of biological role, reversibly transfers an adenylyl group from ATP to 4'-phosphopantetheine, yielding dephospho-CoA (dPCoA) and pyrophosphate. The polypeptide is Phosphopantetheine adenylyltransferase (Thermosipho melanesiensis (strain DSM 12029 / CIP 104789 / BI429)).